We begin with the raw amino-acid sequence, 93 residues long: Small ribosomal subunit protein uS19 (93 aa).

This sequence belongs to the universal ribosomal protein uS19 family.

In terms of biological role, protein S19 forms a complex with S13 that binds strongly to the 16S ribosomal RNA. This chain is Small ribosomal subunit protein uS19, found in Desulfitobacterium hafniense (strain Y51).